Reading from the N-terminus, the 153-residue chain is MPRGSRSRTSRVTPPASRAPQMRAAPRRAPAAQPPAAAAPSAVGSPAAAPRQPGLMAQMATTAAGVAVGSAVGHTLGHAITGGFSGGGSAEPAKPDITYQEPQGAQLQNQQSFGPCSLEIKQFLECAQNQSDVKLCEGFNEVLRQCRIANGLM.

Disordered stretches follow at residues 1 to 51 and 78 to 106; these read MPRG…AAPR and HAIT…QGAQ. Positions 14-51 are enriched in low complexity; it reads PPASRAPQMRAAPRRAPAAQPPAAAAPSAVGSPAAAPR. The CHCH domain occupies 113 to 153; the sequence is FGPCSLEIKQFLECAQNQSDVKLCEGFNEVLRQCRIANGLM. 2 short sequence motifs (cx9C motif) span residues 116–126 and 136–146; these read CSLEIKQFLEC and CEGFNEVLRQC. 2 cysteine pairs are disulfide-bonded: Cys-116–Cys-146 and Cys-126–Cys-136.

As to quaternary structure, interacts with RBPJ.

Its subcellular location is the nucleus. The protein resides in the mitochondrion. It localises to the mitochondrion intermembrane space. Functionally, transcription factor. Binds to the oxygen responsive element of COX4I2 and activates its transcription under hypoxia conditions (4% oxygen), as well as normoxia conditions (20% oxygen). The sequence is that of Coiled-coil-helix-coiled-coil-helix domain-containing protein 2 (Chchd2) from Mus musculus (Mouse).